Reading from the N-terminus, the 366-residue chain is tRNA 2-selenouridine synthase (366 aa).

Residues 12–135 (FLNDVPMMDA…MRTFLLDTLH (124 aa)) enclose the Rhodanese domain. Cysteine 95 acts as the S-selanylcysteine intermediate in catalysis.

This sequence belongs to the SelU family. In terms of assembly, monomer.

The catalysed reaction is 5-methylaminomethyl-2-thiouridine(34) in tRNA + selenophosphate + (2E)-geranyl diphosphate + H2O + H(+) = 5-methylaminomethyl-2-selenouridine(34) in tRNA + (2E)-thiogeraniol + phosphate + diphosphate. It carries out the reaction 5-methylaminomethyl-2-thiouridine(34) in tRNA + (2E)-geranyl diphosphate = 5-methylaminomethyl-S-(2E)-geranyl-thiouridine(34) in tRNA + diphosphate. It catalyses the reaction 5-methylaminomethyl-S-(2E)-geranyl-thiouridine(34) in tRNA + selenophosphate + H(+) = 5-methylaminomethyl-2-(Se-phospho)selenouridine(34) in tRNA + (2E)-thiogeraniol. The enzyme catalyses 5-methylaminomethyl-2-(Se-phospho)selenouridine(34) in tRNA + H2O = 5-methylaminomethyl-2-selenouridine(34) in tRNA + phosphate. Functionally, involved in the post-transcriptional modification of the uridine at the wobble position (U34) of tRNA(Lys), tRNA(Glu) and tRNA(Gln). Catalyzes the conversion of 2-thiouridine (S2U-RNA) to 2-selenouridine (Se2U-RNA). Acts in a two-step process involving geranylation of 2-thiouridine (S2U) to S-geranyl-2-thiouridine (geS2U) and subsequent selenation of the latter derivative to 2-selenouridine (Se2U) in the tRNA chain. The sequence is that of tRNA 2-selenouridine synthase from Pseudomonas savastanoi pv. phaseolicola (strain 1448A / Race 6) (Pseudomonas syringae pv. phaseolicola (strain 1448A / Race 6)).